We begin with the raw amino-acid sequence, 90 residues long: Gene 56 protein (90 aa).

The 90-residue stretch at methionine 1–leucine 90 folds into the Glutaredoxin domain. A disulfide bridge connects residues cysteine 16 and cysteine 19.

This chain is Gene 56 protein (56), found in Mycobacterium phage D29 (Mycobacteriophage D29).